Here is a 116-residue protein sequence, read N- to C-terminus: Large ribosomal subunit protein bL17 (116 aa).

The protein belongs to the bacterial ribosomal protein bL17 family. As to quaternary structure, part of the 50S ribosomal subunit. Contacts protein L32.

This chain is Large ribosomal subunit protein bL17, found in Synechococcus sp. (strain JA-3-3Ab) (Cyanobacteria bacterium Yellowstone A-Prime).